Reading from the N-terminus, the 357-residue chain is Protein-arginine kinase (357 aa).

A Phosphagen kinase C-terminal domain is found at 24–256 (VIISSRVRLA…LQLVTQERAA (233 aa)). Residues 27–31 (SSRVR), H93, R127, 178–182 (RASVM), and 209–214 (RGLYGE) contribute to the ATP site. The RDXXRA motif of the pArg binding pocket involved in allosteric regulation motif lies at 339–344 (RDIFRA).

Belongs to the ATP:guanido phosphotransferase family.

It carries out the reaction L-arginyl-[protein] + ATP = N(omega)-phospho-L-arginyl-[protein] + ADP + H(+). Appears to be allosterically activated by the binding of pArg-containing polypeptides to the pArg-binding pocket localized in the C-terminal domain of McsB. Functionally, catalyzes the specific phosphorylation of arginine residues in proteins. This Desulforamulus reducens (strain ATCC BAA-1160 / DSM 100696 / MI-1) (Desulfotomaculum reducens) protein is Protein-arginine kinase.